The chain runs to 476 residues: UDP-N-acetylmuramate--L-alanine ligase (476 aa).

115–121 (GTHGKTT) is an ATP binding site.

The protein belongs to the MurCDEF family.

The protein resides in the cytoplasm. The catalysed reaction is UDP-N-acetyl-alpha-D-muramate + L-alanine + ATP = UDP-N-acetyl-alpha-D-muramoyl-L-alanine + ADP + phosphate + H(+). It participates in cell wall biogenesis; peptidoglycan biosynthesis. In terms of biological role, cell wall formation. The chain is UDP-N-acetylmuramate--L-alanine ligase from Paramagnetospirillum magneticum (strain ATCC 700264 / AMB-1) (Magnetospirillum magneticum).